Here is a 118-residue protein sequence, read N- to C-terminus: Holin-like protein CidA 2 (118 aa).

A run of 4 helical transmembrane segments spans residues 5 to 27 (MLLLQVGVLYVFSLVGTWIQGVF), 31 to 50 (MPGSLIGMLMLFLLLSTRIL), 62 to 84 (LLVFLPLFLIPSTTGLMEYESFL), and 88 to 110 (GSIIFLLVVISTVVTLIVSGYIS).

The protein belongs to the CidA/LrgA family. CidA subfamily.

It is found in the cell membrane. In terms of biological role, increases the activity of extracellular murein hydrolases possibly by mediating their export via hole formation. Inhibited by the antiholin-like proteins LrgAB. In an unstressed cell, the LrgAB products probably inhibit the function of the CidA protein. When a cell is stressed by the addition of antibiotics or by other factors in the environment, CidA possibly oligomerizes within the bacterial cell membrane, creating lesions that disrupt the proton motive force, which in turn results in loss of cell viability. These lesions are also hypothesized to regulate the subsequent cell lysis by either allowing the murein hydrolases access to the cell wall substrate and/or regulating their activity by a possible change in the cell wall pH that results from loss of membrane potential. The polypeptide is Holin-like protein CidA 2 (cidA2) (Bacillus anthracis).